The chain runs to 305 residues: MTSFWSWYVTLLSLGTIAALVWLLLATRKGQRPDSTEETVGHSYDGIEEYDNPLPRWWFMLFVGTVIFALGYLVLYPGLGNWKGILPGYEGGWTQVKEWQREMDKANEQYGPLYAKYAAMPVEEVAKDPQALKMGGRLFASNCSVCHGSDAKGAYGFPNLTDDDWLWGGEPETIKTTILHGRQAVMPGWKDVIGEEGIRNVAGYVRSLSGRDTPEGISVDIEQGQKIFAANCVVCHGPEAKGVTAMGAPNLTDNVWLYGSSFAQIQQTLRYGRNGRMPAQEAILGNDKVHLLAAYVYSLSQQPEQ.

A run of 2 helical transmembrane segments spans residues 4 to 24 and 57 to 77; these read FWSWYVTLLSLGTIAALVWLL and WWFMLFVGTVIFALGYLVLYP. 2 Cytochrome c domains span residues 130-209 and 219-300; these read QALK…RSLS and VDIE…YSLS. 8 residues coordinate heme c: Cys143, Cys146, His147, Met186, Cys232, Cys235, His236, and Met277.

As to quaternary structure, component of the cbb3-type cytochrome c oxidase at least composed of CcoN, CcoO, CcoQ and CcoP. It depends on heme c as a cofactor.

Its subcellular location is the cell inner membrane. Its pathway is energy metabolism; oxidative phosphorylation. C-type cytochrome. Part of the cbb3-type cytochrome c oxidase complex. CcoP subunit is required for transferring electrons from donor cytochrome c via its heme groups to CcoO subunit. From there, electrons are shuttled to the catalytic binuclear center of CcoN subunit where oxygen reduction takes place. The complex also functions as a proton pump. The sequence is that of Cbb3-type cytochrome c oxidase subunit CcoP2 from Stutzerimonas stutzeri (Pseudomonas stutzeri).